The sequence spans 155 residues: Protein-export protein SecB (155 aa).

The protein belongs to the SecB family. As to quaternary structure, homotetramer, a dimer of dimers. One homotetramer interacts with 1 SecA dimer.

Its subcellular location is the cytoplasm. In terms of biological role, one of the proteins required for the normal export of preproteins out of the cell cytoplasm. It is a molecular chaperone that binds to a subset of precursor proteins, maintaining them in a translocation-competent state. It also specifically binds to its receptor SecA. This chain is Protein-export protein SecB, found in Vibrio vulnificus (strain CMCP6).